A 660-amino-acid polypeptide reads, in one-letter code: DNA mismatch repair protein MutL (660 aa).

Belongs to the DNA mismatch repair MutL/HexB family.

This protein is involved in the repair of mismatches in DNA. It is required for dam-dependent methyl-directed DNA mismatch repair. May act as a 'molecular matchmaker', a protein that promotes the formation of a stable complex between two or more DNA-binding proteins in an ATP-dependent manner without itself being part of a final effector complex. This Streptococcus pyogenes serotype M3 (strain ATCC BAA-595 / MGAS315) protein is DNA mismatch repair protein MutL.